A 377-amino-acid chain; its full sequence is Probable isocitrate dehydrogenase [NAD] subunit alpha, mitochondrial (377 aa).

Residues arginine 131, arginine 141, arginine 162, and aspartate 249 each coordinate substrate. Mg(2+)-binding residues include aspartate 249, aspartate 273, and aspartate 277.

It belongs to the isocitrate and isopropylmalate dehydrogenases family. Heterooligomer of subunits alpha, beta, and gamma in the apparent ratio of 2:1:1. Requires Mg(2+) as cofactor. It depends on Mn(2+) as a cofactor.

It localises to the mitochondrion. The catalysed reaction is D-threo-isocitrate + NAD(+) = 2-oxoglutarate + CO2 + NADH. Probable catalytic subunit of the enzyme which catalyzes the decarboxylation of isocitrate (ICT) into alpha-ketoglutarate. This chain is Probable isocitrate dehydrogenase [NAD] subunit alpha, mitochondrial, found in Drosophila melanogaster (Fruit fly).